Consider the following 164-residue polypeptide: Phosphatidyl-N-methylethanolamine N-methyltransferase (164 aa).

The segment at residues 1–21 (MGLLAAIGVLLPFPFYWWLWT) is an intramembrane region (helical). The Lumenal portion of the chain corresponds to 22–30 (NAQSWVNLC). A helical transmembrane segment spans residues 31–52 (GRERDPSTVMARVSHVLKAAQL). Residues 53–69 (LSLFSVASLSWPPPLYF) lie on the Cytoplasmic side of the membrane. The chain crosses the membrane as a helical span at residues 70-90 (WPLMAFGQFLNFRVYQLLGEA). 74–76 (AFG) is an S-adenosyl-L-methionine binding site. Residues 91–131 (GTYYGVRFGKNIPWVTEFPFGVIRDPQYVGSIMSLLACLSW) lie on the Lumenal side of the membrane. Residues 132-151 (VPFQYILLWSLGYVFMMFLE) traverse the membrane as a helical segment. The Cytoplasmic portion of the chain corresponds to 152 to 164 (SKEDPNARAKSIS). Residue 154–155 (ED) coordinates S-adenosyl-L-methionine.

Belongs to the class VI-like SAM-binding methyltransferase superfamily. PEMT/PEM2 methyltransferase family.

The protein resides in the endoplasmic reticulum membrane. It carries out the reaction a 1,2-diacyl-sn-glycero-3-phospho-N-methylethanolamine + S-adenosyl-L-methionine = a 1,2-diacyl-sn-glycero-3-phospho-N,N-dimethylethanolamine + S-adenosyl-L-homocysteine + H(+). It catalyses the reaction a 1,2-diacyl-sn-glycero-3-phospho-N,N-dimethylethanolamine + S-adenosyl-L-methionine = a 1,2-diacyl-sn-glycero-3-phosphocholine + S-adenosyl-L-homocysteine + H(+). The protein operates within phospholipid metabolism; phosphatidylcholine biosynthesis. Catalyzes the second two steps of the methylation pathway of phosphatidylcholine biosynthesis, the SAM-dependent methylation of phosphatidylmonomethylethanolamine (PMME) to phosphatidyldimethylethanolamine (PDME) and of PDME to phosphatidylcholine (PC). The chain is Phosphatidyl-N-methylethanolamine N-methyltransferase (PLMT) from Arabidopsis thaliana (Mouse-ear cress).